A 512-amino-acid chain; its full sequence is MRHLSSPPWPLLLLLLLSSFTSGESSLSAEKNKLHTGGLSRQSFPKGFVFGTATSAYQVEGETHQDGRGPSIWDAFVKIPGKIAKNATAEITVDQYHRYKEDVDLMKKLNFDAYRFSISWSRIFPEGSGKVNWKGVAYYNRLIDYMVQKGITPYANLYHYDLPLALENKYKGLLGRQVVKDFADYAEFCYKTFGDRVKNWMTFNEPRVVAALGYDNGIFAPGRCSKAFGNCTEGNSATEPYIVTHHLILAHAAAVQRYRKYYQAKQKGRVGILLDFVWYEPLTRSKADNLAAQRARDFHIGWFIHPLVYGEYPKTMQNIVKERLPKFTEKEVKMVKGSIDFVGINQYTTYYMSEPHPTTKPKDLGYQQDWNVEFGFAKLGKPIGPRAYSSWLYNVPWGMYKALMYMKERYGNPTMILSENGMDDPGNVTLAQGLHDTTRIKYYKDYLTNLKKARDDGANVVGYFAWSLLDNFEWLSGYTSRFGIVYVDYKTLKRYPKMSAQWFKQLLKRNNK.

Residues 1–23 (MRHLSSPPWPLLLLLLLSSFTSG) form the signal peptide. Glutamine 58 is an a beta-D-glucoside binding site. Asparagine 86 carries an N-linked (GlcNAc...) asparagine glycan. A beta-D-glucoside is bound by residues histidine 159 and 204–205 (NE). The active-site Proton donor is glutamate 205. Cysteine 224 and cysteine 231 are disulfide-bonded. N-linked (GlcNAc...) asparagine glycosylation is present at asparagine 230. The a beta-D-glucoside site is built by tyrosine 347 and glutamate 419. The active-site Nucleophile is the glutamate 419. The N-linked (GlcNAc...) asparagine glycan is linked to asparagine 427. A beta-D-glucoside is bound by residues tryptophan 466, 473–474 (EW), and phenylalanine 482.

It belongs to the glycosyl hydrolase 1 family. Homodimer.

It localises to the secreted. The enzyme catalyses Hydrolysis of terminal, non-reducing beta-D-glucosyl residues with release of beta-D-glucose.. Its function is as follows. Hydrolyzes p-nitrophenyl beta-D-glucoside, p-nitrophenyl beta-D-mannoside, cellobiose, 4-methylumbelliferyl-beta-D-glucoside, laminarin, amygdalin, esculin and gentiobiose. This chain is Beta-glucosidase 44, found in Arabidopsis thaliana (Mouse-ear cress).